Consider the following 263-residue polypeptide: UPF0758 protein Pden_2304 (263 aa).

Residues 141 to 263 (VLTSWDALLD…ELSFRSEGLL (123 aa)) form the MPN domain. Residues H212, H214, and D225 each coordinate Zn(2+). The short motif at 212-225 (HNHPSGDPTPSQAD) is the JAMM motif element.

Belongs to the UPF0758 family.

The polypeptide is UPF0758 protein Pden_2304 (Paracoccus denitrificans (strain Pd 1222)).